Reading from the N-terminus, the 154-residue chain is MFKEFKIFIMRGNVVDLAVGIVIGAAFGAIVNSLVKDVLMPPIGLLLGNVDFGNLFIVLKEGAIGGPYESLLVAQTAGAVTINYGVFINALINFLILAMAIFFFVVRPLNQLAARQKSKEAVIPAQTDKKDCPYCDTQIPLKASKCPYCTSELM.

A run of 2 helical transmembrane segments spans residues 14–34 and 86–106; these read VVDLAVGIVIGAAFGAIVNSL and VFINALINFLILAMAIFFFVV.

Belongs to the MscL family. In terms of assembly, homopentamer.

Its subcellular location is the cell membrane. Its function is as follows. Channel that opens in response to stretch forces in the membrane lipid bilayer. May participate in the regulation of osmotic pressure changes within the cell. This chain is Large-conductance mechanosensitive channel, found in Dehalococcoides mccartyi (strain CBDB1).